The sequence spans 466 residues: MAKTLYEKLFDAHVVYEAENETPLLYIDRHLVHEVTSPQAFDGLRAHGRPVRQPGKTFATMDHNVSTQTKDINACGEMARIQMQELIKNCKEFGVELYDLNHPYQGIVHVMGPEQGVTLPGMTIVCGDSHTATHGAFGALAFGIGTSEVEHVLATQTLKQGRAKTMKIEVQGKAAPGITAKDIVLAIIGKTGSAGGTGHVVEFCGEAIRDLSMEGRMTLCNMAIEMGAKAGLVAPDETTFNYVKGRLHAPKGKDFDDAVAYWKTLQTDEGATFDTVVTLQAEEISPQVTWGTNLGQVISVNDNIPDPASFADPVERASAEKALAYMGLKPGIPLTEVAIDKVFIGSCTNSRIEDLRAAAEIAKGRKVAPGVQALVVPGSGPVKAQAEAEGLDKIFIEAGFEWRLPGCSMCLAMNNDRLNPGERCASTSNRNFEGRQGRGGRTHLVSPAMAAAAAVTGHFADIRNIK.

[4Fe-4S] cluster contacts are provided by cysteine 347, cysteine 407, and cysteine 410.

Belongs to the aconitase/IPM isomerase family. LeuC type 1 subfamily. Heterodimer of LeuC and LeuD. Requires [4Fe-4S] cluster as cofactor.

The enzyme catalyses (2R,3S)-3-isopropylmalate = (2S)-2-isopropylmalate. It functions in the pathway amino-acid biosynthesis; L-leucine biosynthesis; L-leucine from 3-methyl-2-oxobutanoate: step 2/4. Catalyzes the isomerization between 2-isopropylmalate and 3-isopropylmalate, via the formation of 2-isopropylmaleate. The protein is 3-isopropylmalate dehydratase large subunit of Escherichia coli O139:H28 (strain E24377A / ETEC).